A 50-amino-acid polypeptide reads, in one-letter code: Light-harvesting protein B-870 beta chain (50 aa).

Residues 2 to 22 (ADNTDLSFTGLTDEQAQELHS) lie on the Cytoplasmic side of the membrane. 2 residues coordinate a bacteriochlorophyll: histidine 21 and histidine 39. The chain crosses the membrane as a helical span at residues 23–45 (VYMSGLFLFAAVAVVAHLATYIW). At 46–50 (RPWFG) the chain is on the periplasmic side.

This sequence belongs to the antenna complex beta subunit family. The core complex is formed by different alpha and beta chains, binding bacteriochlorophyll molecules, and arranged most probably in tetrameric structures disposed around the reaction center. The non-pigmented gamma chains may constitute additional components.

Its subcellular location is the cell inner membrane. Functionally, antenna complexes are light-harvesting systems, which transfer the excitation energy to the reaction centers. This is Light-harvesting protein B-870 beta chain (pufB) from Roseobacter denitrificans (strain ATCC 33942 / OCh 114) (Erythrobacter sp. (strain OCh 114)).